We begin with the raw amino-acid sequence, 388 residues long: Staphopain A (388 aa).

A signal peptide spans 1–25 (MKRNFPKLIALSLIFSLSVTPIANA). Positions 26–214 (ESNSNIKAKD…TSQFKSNNYT (189 aa)) are excised as a propeptide. Active-site residues include C238, H334, and N355.

Belongs to the peptidase C47 family. In terms of assembly, in the cytoplasm, prematurely activated/folded ScpA forms a stable non-covalent complex with ScpB. In terms of processing, cleavage leads to the activation of ScpA probably by an auto-catalytic manner.

The protein resides in the secreted. The catalysed reaction is Broad endopeptidase action on proteins including elastin, but rather limited hydrolysis of small-molecule substrates. Assays are conveniently made with hemoglobin, casein or Z-Phe-Arg-NHMec as substrate.. Its activity is regulated as follows. Prematurely activated/folded staphopain A is inhibited by staphostatin A (ScpB), which is probably required to protect staphylococcal cytoplasmic proteins from degradation by ScpA. Cysteine protease that plays an important role in the inhibition of host innate immune response. Cleaves host elastins found in connective tissues, pulmonary surfactant protein A in the lungs, and the chemokine receptor CXCR2 on leukocytes. Proteolytic cleavage of surfactant protein A impairs bacterial phagocytosis by neutrophils while CXCR2 degradation blocks neutrophil activation and chemotaxis. Additionally, promotes vascular leakage by activating the plasma kallikerin/kinin system, resulting in hypotension. The chain is Staphopain A (sspP) from Staphylococcus aureus (strain COL).